Reading from the N-terminus, the 38-residue chain is Large ribosomal subunit protein bL36 (38 aa).

The protein belongs to the bacterial ribosomal protein bL36 family.

The sequence is that of Large ribosomal subunit protein bL36 from Kosmotoga olearia (strain ATCC BAA-1733 / DSM 21960 / TBF 19.5.1).